Here is a 106-residue protein sequence, read N- to C-terminus: Large ribosomal subunit protein bL21 (106 aa).

This sequence belongs to the bacterial ribosomal protein bL21 family. As to quaternary structure, part of the 50S ribosomal subunit. Contacts protein L20.

Its function is as follows. This protein binds to 23S rRNA in the presence of protein L20. In Xylella fastidiosa (strain 9a5c), this protein is Large ribosomal subunit protein bL21.